A 191-amino-acid chain; its full sequence is Large ribosomal subunit protein eL15 (191 aa).

Belongs to the eukaryotic ribosomal protein eL15 family.

This is Large ribosomal subunit protein eL15 (rpl15e) from Pyrobaculum aerophilum (strain ATCC 51768 / DSM 7523 / JCM 9630 / CIP 104966 / NBRC 100827 / IM2).